A 566-amino-acid chain; its full sequence is DBIRD complex subunit ZNF326 (566 aa).

2 disordered regions span residues 19–81 (HCGV…ESYD) and 145–180 (RPGFMEDRGRESYSSYSSFSSPHMKPAPVGSRGRGT). The segment covering 59–73 (SHGGGGGGGGGGGNR) has biased composition (gly residues). Residues 156 to 165 (SYSSYSSFSS) are compositionally biased toward low complexity. A Bipartite nuclear localization signal motif is present at residues 240–263 (KRKMMPQPYNKPGGTFIKKPKMTK). The interval 314 to 347 (FGDSKGEGKSEEEEKRRIEARREKQRRRREKNSE) is disordered. Residues 317-335 (SKGEGKSEEEEKRRIEARR) are compositionally biased toward basic and acidic residues. 2 consecutive C2H2 AKAP95-type zinc fingers follow at residues 359-381 (CSFCKFRTFEEKEIESHLESAAH) and 452-475 (CSACSVYVPALHSSVQQHLKSPDH). The disordered stretch occupies residues 516 to 566 (PFEINDQAQEQQTEEEDKAEEPAEGEEEEEEEEEEETEEQTDFTLDHTEDN). The span at 527–556 (QTEEEDKAEEPAEGEEEEEEEEEEETEEQT) shows a compositional bias: acidic residues.

It belongs to the AKAP95 family. Component of the DBIRD complex.

Its subcellular location is the nucleus. Its function is as follows. Core component of the DBIRD complex, a multiprotein complex that acts at the interface between core mRNP particles and RNA polymerase II (RNAPII) and integrates transcript elongation with the regulation of alternative splicing. The polypeptide is DBIRD complex subunit ZNF326 (ZNF326) (Gallus gallus (Chicken)).